Here is a 451-residue protein sequence, read N- to C-terminus: Charged multivesicular body protein 7 (451 aa).

The tract at residues 1 to 22 is disordered; it reads MWSPEREAQAPTGGDPAGLLPP. At serine 232 the chain carries Phosphoserine. The stretch at 248–312 forms a coiled coil; it reads EQLLSRKVES…DTVQGILDRI (65 aa). At threonine 409 the chain carries Phosphothreonine. Serine 411, serine 432, and serine 442 each carry phosphoserine. Positions 431–451 are disordered; that stretch reads LSEGGLIPSSKSPKRQLEPTL.

This sequence belongs to the SNF7 family. Interacts with CHMP4B, but not with VPS25. Interacts with LEMD2 (via C-terminus).

The protein localises to the cytoplasm. It localises to the nucleus envelope. ESCRT-III-like protein required to recruit the ESCRT-III complex to the nuclear envelope (NE) during late anaphase. Together with SPAST, the ESCRT-III complex promotes NE sealing and mitotic spindle disassembly during late anaphase. Recruited to the reforming NE during anaphase by LEMD2. Plays a role in the endosomal sorting pathway. The sequence is that of Charged multivesicular body protein 7 (Chmp7) from Mus musculus (Mouse).